The chain runs to 293 residues: Ribonuclease HIII (293 aa).

The region spanning 78–293 (LPLIGTDEVG…TEKAKKRLER (216 aa)) is the RNase H type-2 domain. A divalent metal cation contacts are provided by aspartate 84, glutamate 85, and aspartate 187.

The protein belongs to the RNase HII family. RnhC subfamily. The cofactor is Mn(2+). It depends on Mg(2+) as a cofactor.

It localises to the cytoplasm. The enzyme catalyses Endonucleolytic cleavage to 5'-phosphomonoester.. Its function is as follows. Endonuclease that specifically degrades the RNA of RNA-DNA hybrids. The protein is Ribonuclease HIII of Streptococcus pneumoniae serotype 19F (strain G54).